The sequence spans 703 residues: Putative glycosyl hydrolase ecdE (703 aa).

Residues 1-21 form the signal peptide; it reads MKLNIFASAILLCTSAFPVAA. Asp-47 is a catalytic residue. N-linked (GlcNAc...) asparagine glycans are attached at residues Asn-104, Asn-120, Asn-293, Asn-397, Asn-443, and Asn-641.

It belongs to the glycosyl hydrolase 32 family.

In Aspergillus rugulosus (Emericella rugulosa), this protein is Putative glycosyl hydrolase ecdE.